Here is a 104-residue protein sequence, read N- to C-terminus: Elicitor peptide 6 (104 aa).

A propeptide spanning residues 1 to 81 (MEVNGEEERR…TVEETGFMAR (81 aa)) is cleaved from the precursor. The span at 48 to 61 (SSSIPPSSSSSSPS) shows a compositional bias: low complexity. The tract at residues 48 to 104 (SSSIPPSSSSSSPSLVEEEDSGTETVEETGFMARITAVLRRRPRPPPYSSGRPGQNN) is disordered. Positions 63-74 (VEEEDSGTETVE) are enriched in acidic residues.

It belongs to the brassicaceae elicitor peptide family.

Its function is as follows. Elicitor of plant defense. This chain is Elicitor peptide 6 (PEP6), found in Arabidopsis thaliana (Mouse-ear cress).